The primary structure comprises 362 residues: Probable dual-specificity RNA methyltransferase RlmN (362 aa).

Glu105 acts as the Proton acceptor in catalysis. One can recognise a Radical SAM core domain in the interval 111–344; the sequence is HEYGNSICVT…VTIRREQGHD (234 aa). A disulfide bridge connects residues Cys118 and Cys349. Positions 125, 129, and 132 each coordinate [4Fe-4S] cluster. Residues 175-176, Ser207, 230-232, and Asn306 each bind S-adenosyl-L-methionine; these read GE and SLH. Catalysis depends on Cys349, which acts as the S-methylcysteine intermediate.

It belongs to the radical SAM superfamily. RlmN family. The cofactor is [4Fe-4S] cluster.

The protein resides in the cytoplasm. The catalysed reaction is adenosine(2503) in 23S rRNA + 2 reduced [2Fe-2S]-[ferredoxin] + 2 S-adenosyl-L-methionine = 2-methyladenosine(2503) in 23S rRNA + 5'-deoxyadenosine + L-methionine + 2 oxidized [2Fe-2S]-[ferredoxin] + S-adenosyl-L-homocysteine. It catalyses the reaction adenosine(37) in tRNA + 2 reduced [2Fe-2S]-[ferredoxin] + 2 S-adenosyl-L-methionine = 2-methyladenosine(37) in tRNA + 5'-deoxyadenosine + L-methionine + 2 oxidized [2Fe-2S]-[ferredoxin] + S-adenosyl-L-homocysteine. In terms of biological role, specifically methylates position 2 of adenine 2503 in 23S rRNA and position 2 of adenine 37 in tRNAs. This chain is Probable dual-specificity RNA methyltransferase RlmN, found in Bacillus mycoides (strain KBAB4) (Bacillus weihenstephanensis).